The sequence spans 487 residues: MVEEGTMERLRTLGTLGTGIGWRPEIADAVERMPGIDWVEAVAENVCPGHLPESLLRLRARGVTVVPHGVSLGLGGADRPDEGRLAALAERAEALGSPLVTEHIAFVRAGGALTASPLLEAGHLLPVPRTRDALDVLCENVRIAQAALPVPLAVENIAALISWPGEEMTEGQFLYDLVERTGVRLLIDVANLHTNHVNRGEDPAKALDELPVEAIAYVHVAGGFERDGVWHDSHAHPVPQPVLDILADLASRTTPPGVLLERDENFPEPGELERELGAIRKTLEKAGTRAGASAGAAGAATRTAAELTVAESTAVGAIAGPRRGGADAQAAPRAAGTEALSAASTSTPADPARQRLALAQAALLSALVAGTPVPEGFDRVRLGVQARALAAKRADVVAKVAPELPEILAEEYRPAFLTYAPGHPMTGGYRRDALDFAEHLLLAGRPEDAEARRRLRDWWLERSGPTPPSRHPAARLARATRRVLLRR.

A UPF0276 region spans residues 1–285 (MVEEGTMERL…LGAIRKTLEK (285 aa)). The segment at 286 to 487 (AGTRAGASAG…RATRRVLLRR (202 aa)) is unknown. Residues 319–348 (AGPRRGGADAQAAPRAAGTEALSAASTSTP) are disordered. A compositionally biased stretch (low complexity) spans 326–348 (ADAQAAPRAAGTEALSAASTSTP).

It in the N-terminal section; belongs to the UPF0276 family.

This Streptomyces avermitilis (strain ATCC 31267 / DSM 46492 / JCM 5070 / NBRC 14893 / NCIMB 12804 / NRRL 8165 / MA-4680) protein is UPF0276 protein SAV_2218.